The sequence spans 194 residues: Probable RNA 2'-phosphotransferase (194 aa).

This sequence belongs to the KptA/TPT1 family.

Removes the 2'-phosphate from RNA via an intermediate in which the phosphate is ADP-ribosylated by NAD followed by a presumed transesterification to release the RNA and generate ADP-ribose 1''-2''-cyclic phosphate (APPR&gt;P). May function as an ADP-ribosylase. The protein is Probable RNA 2'-phosphotransferase of Burkholderia lata (strain ATCC 17760 / DSM 23089 / LMG 22485 / NCIMB 9086 / R18194 / 383).